The primary structure comprises 215 residues: Cytochrome b6 (215 aa).

A helical membrane pass occupies residues 32–52 (IFYCLGGITLTCFLVQVATGF). Residue cysteine 35 participates in heme c binding. 2 residues coordinate heme b: histidine 86 and histidine 100. The next 3 helical transmembrane spans lie at 90–110 (ASMM…TGGF), 116–136 (LTWV…VTGY), and 186–206 (LHTF…FLMI). Heme b is bound by residues histidine 187 and histidine 202.

Belongs to the cytochrome b family. PetB subfamily. As to quaternary structure, the 4 large subunits of the cytochrome b6-f complex are cytochrome b6, subunit IV (17 kDa polypeptide, PetD), cytochrome f and the Rieske protein, while the 4 small subunits are PetG, PetL, PetM and PetN. The complex functions as a dimer. It depends on heme b as a cofactor. The cofactor is heme c.

The protein localises to the plastid. Its subcellular location is the chloroplast thylakoid membrane. In terms of biological role, component of the cytochrome b6-f complex, which mediates electron transfer between photosystem II (PSII) and photosystem I (PSI), cyclic electron flow around PSI, and state transitions. The protein is Cytochrome b6 of Marchantia polymorpha (Common liverwort).